The chain runs to 457 residues: MIHNKLLIAGSIILNLVFTIHILYNNTSTWSPTWTNRAALEAEAAASVSCSGHGRSYVDGLGVLDGHKPCECHDCYTGKDCSVLLKDCPVDANSGDPLFLEPFWIRKAEESAVVESGWHRMSYTFNGYGLFMSAELEKIIRKLHNVVGNAVTDNRFIIFGAGATQLLAASVHALSQTNSLSPSRLVTSVPYYNLYKQQADFFNSTNLKFEGDASAWKRSERNDDIKQVIEIVTSPNNPDGKLKRAVLDGPNVKYIHDYAYYWPYFSPITRQADEDLSLFSLSKTTGHAGSRFGWALVKEKTVYEKMKIYISLSSMGVSRDTQLRALQLLKVVIGDGGNEIFRFGYGTLKKRWEILNKIFSMSTRFSLETIKPEYCNYFKKVREFTPSYAWVKCERPEDTDCYEIFKAAKITGRNGEMFGSDERFVRLSLIRSQDDFDQLIAMLKKFVSKEAVVVDSI.

Residues 6-26 traverse the membrane as a helical segment; that stretch reads LLIAGSIILNLVFTIHILYNN. Pyridoxal 5'-phosphate contacts are provided by residues Tyr-123, 163-164, Asn-237, 257-260, 280-283, and Arg-291; these read AT, DYAY, and SLSK. An N6-(pyridoxal phosphate)lysine modification is found at Lys-283.

The protein belongs to the alliinase family. It depends on pyridoxal 5'-phosphate as a cofactor.

It is found in the membrane. Its function is as follows. Probable aminotransferase. This Arabidopsis thaliana (Mouse-ear cress) protein is Tryptophan aminotransferase-related protein 3 (TAR3).